We begin with the raw amino-acid sequence, 272 residues long: Phosphatidylglycerol--prolipoprotein diacylglyceryl transferase (272 aa).

3 consecutive transmembrane segments (helical) span residues 19–39 (ISIR…YFLV), 58–78 (LNTV…VVFY), and 94–114 (WHGG…GLIF). R141 provides a ligand contact to a 1,2-diacyl-sn-glycero-3-phospho-(1'-sn-glycerol). Helical transmembrane passes span 207–227 (GTIL…IENF) and 234–254 (LGFI…MILC).

It belongs to the Lgt family.

The protein localises to the cell inner membrane. The enzyme catalyses L-cysteinyl-[prolipoprotein] + a 1,2-diacyl-sn-glycero-3-phospho-(1'-sn-glycerol) = an S-1,2-diacyl-sn-glyceryl-L-cysteinyl-[prolipoprotein] + sn-glycerol 1-phosphate + H(+). The protein operates within protein modification; lipoprotein biosynthesis (diacylglyceryl transfer). Catalyzes the transfer of the diacylglyceryl group from phosphatidylglycerol to the sulfhydryl group of the N-terminal cysteine of a prolipoprotein, the first step in the formation of mature lipoproteins. The protein is Phosphatidylglycerol--prolipoprotein diacylglyceryl transferase of Desulfotalea psychrophila (strain LSv54 / DSM 12343).